Here is a 119-residue protein sequence, read N- to C-terminus: Phosphoribosyl-AMP cyclohydrolase (119 aa).

Mg(2+) is bound at residue Asp-77. Cys-78 contributes to the Zn(2+) binding site. Mg(2+) is bound by residues Asp-79 and Asp-81. Residues Cys-94 and Cys-101 each coordinate Zn(2+).

It belongs to the PRA-CH family. As to quaternary structure, homodimer. Requires Mg(2+) as cofactor. Zn(2+) is required as a cofactor.

It is found in the cytoplasm. It catalyses the reaction 1-(5-phospho-beta-D-ribosyl)-5'-AMP + H2O = 1-(5-phospho-beta-D-ribosyl)-5-[(5-phospho-beta-D-ribosylamino)methylideneamino]imidazole-4-carboxamide. It participates in amino-acid biosynthesis; L-histidine biosynthesis; L-histidine from 5-phospho-alpha-D-ribose 1-diphosphate: step 3/9. Functionally, catalyzes the hydrolysis of the adenine ring of phosphoribosyl-AMP. This chain is Phosphoribosyl-AMP cyclohydrolase, found in Cereibacter sphaeroides (strain ATCC 17025 / ATH 2.4.3) (Rhodobacter sphaeroides).